Consider the following 803-residue polypeptide: Leucine--tRNA ligase (803 aa).

The short motif at 40–51 is the 'HIGH' region element; it reads PYPSGAGLHVGH. Positions 575–579 match the 'KMSKS' region motif; sequence KMSKS. Residue lysine 578 coordinates ATP.

The protein belongs to the class-I aminoacyl-tRNA synthetase family.

The protein resides in the cytoplasm. The enzyme catalyses tRNA(Leu) + L-leucine + ATP = L-leucyl-tRNA(Leu) + AMP + diphosphate. This chain is Leucine--tRNA ligase, found in Listeria monocytogenes serovar 1/2a (strain ATCC BAA-679 / EGD-e).